The primary structure comprises 222 residues: Lipid A 4'-phosphatase (222 aa).

Topologically, residues 1–3 (MAR) are cytoplasmic. Residues 4–24 (FHIILGLVVCFFAWIFFLIFP) traverse the membrane as a helical segment. Over 25 to 58 (NLDIQFAGHFYNSSAHQFIGGYDGFLGFLHWFAR) the chain is Periplasmic. A helical transmembrane segment spans residues 59-79 (FFPIFFSIIVILFLLGSLFID). The Cytoplasmic portion of the chain corresponds to 80–87 (KFKIKYRK). Residues 88-108 (AIFFIAVCLWIGPGLVVNYVF) traverse the membrane as a helical segment. The Periplasmic portion of the chain corresponds to 109–144 (KDHWGRPRPVMVEQFNGDKIFQPPFVISSQCDKNCS). A helical transmembrane segment spans residues 145 to 165 (FVCGDASMGFWLFAFMPLLAT). At 166–169 (RKKK) the chain is on the cytoplasmic side. A helical transmembrane segment spans residues 170–190 (LVAFIAAVVAGGGLGLMRMSQ). Topologically, residues 191–193 (GGH) are periplasmic. A helical membrane pass occupies residues 194–214 (FFSDVVFCGIFVYISTWVVYA). At 215–222 (LMYRKKEY) the chain is on the cytoplasmic side.

This sequence belongs to the lipid A LpxF 4'-phosphatase family.

Its subcellular location is the cell inner membrane. The protein operates within bacterial outer membrane biogenesis; LPS lipid A biosynthesis. In terms of biological role, removes the 4'-phosphate moiety from lipid IV(A) (a tetraacylated precursor of lipid A) and from pentaacylated lipid A, but not from hexaacylated lipid A (as is found in E.coli). Does not dephosphorylate phosphatidic acid, phosphatidylglycerophosphate, or the 1-phosphate group of lipid A and lipid A precursors. Its expression in E.coli confers resistance to the cationic antimicrobial peptide (CAMP) polymyxin B. Plays a critical role in the ability of the bacteria to avoid the host's innate immune system, especially the bactericidal action of CAMPs, although whether it is CAMP-sensitivity or increased sensitivity to the immune system is not clear. The sequence is that of Lipid A 4'-phosphatase from Francisella tularensis subsp. novicida (strain U112).